The sequence spans 506 residues: Deoxyguanosinetriphosphate triphosphohydrolase (506 aa).

An HD domain is found at arginine 66–cysteine 274.

It belongs to the dGTPase family. Type 1 subfamily. In terms of assembly, homotetramer. It depends on Mg(2+) as a cofactor.

It carries out the reaction dGTP + H2O = 2'-deoxyguanosine + triphosphate + H(+). Functionally, dGTPase preferentially hydrolyzes dGTP over the other canonical NTPs. This Yersinia pestis bv. Antiqua (strain Antiqua) protein is Deoxyguanosinetriphosphate triphosphohydrolase.